Consider the following 475-residue polypeptide: Ribulose bisphosphate carboxylase large chain (475 aa).

Positions Met1–Ser2 are excised as a propeptide. At Pro3 the chain carries N-acetylproline. Residue Lys14 is modified to N6,N6,N6-trimethyllysine. Residues Asn123 and Thr173 each contribute to the substrate site. Lys175 (proton acceptor) is an active-site residue. A substrate-binding site is contributed by Lys177. Mg(2+)-binding residues include Lys201, Asp203, and Glu204. N6-carboxylysine is present on Lys201. His294 serves as the catalytic Proton acceptor. Residues Arg295, His327, and Ser379 each coordinate substrate.

It belongs to the RuBisCO large chain family. Type I subfamily. Heterohexadecamer of 8 large chains and 8 small chains; disulfide-linked. The disulfide link is formed within the large subunit homodimers. Requires Mg(2+) as cofactor. The disulfide bond which can form in the large chain dimeric partners within the hexadecamer appears to be associated with oxidative stress and protein turnover.

The protein resides in the plastid. It localises to the chloroplast. It catalyses the reaction 2 (2R)-3-phosphoglycerate + 2 H(+) = D-ribulose 1,5-bisphosphate + CO2 + H2O. The enzyme catalyses D-ribulose 1,5-bisphosphate + O2 = 2-phosphoglycolate + (2R)-3-phosphoglycerate + 2 H(+). In terms of biological role, ruBisCO catalyzes two reactions: the carboxylation of D-ribulose 1,5-bisphosphate, the primary event in carbon dioxide fixation, as well as the oxidative fragmentation of the pentose substrate in the photorespiration process. Both reactions occur simultaneously and in competition at the same active site. The protein is Ribulose bisphosphate carboxylase large chain of Populus trichocarpa (Western balsam poplar).